A 366-amino-acid polypeptide reads, in one-letter code: Transcription factor IIIA (366 aa).

C2H2-type zinc fingers lie at residues 35–59 (YICSFADCGAAYNKNWKLQAHLCKH), 65–89 (FPCKEEGCEKGFTSLHHLTRHSLTH), 95–120 (FTCDSDGCDLRFTTKANMKKHFNRFH), 127–151 (YVCHFENCGKAFKKHNQLKVHQFSH), 157–181 (YECPHEGCDKRFSLPSRLKRHEKVH), 184–210 (YPCKKDDSCSFVGKTWTLYLKHVAECH), 214–236 (AVCDVCNRKFRHKDYLRDHQKTH), 243–268 (YLCPRDGCDRSYTTAFNLRSHIQSFH), and 274–298 (FVCEHAGCGKCFAMKKSLERHSVVH). At Ser38 the chain carries Phosphoserine; by CK2. Residues 299 to 310 (DPEKRKLKEKCP) are compositionally biased toward basic and acidic residues. Positions 299–366 (DPEKRKLKEK…SLVLDKLTIQ (68 aa)) are disordered. Ser336 carries the phosphoserine; by CK2; in vitro modification.

Post-translationally, the N-terminus is blocked. In terms of tissue distribution, synthesized in oocytes and, in much lower levels, in somatic cells.

The protein localises to the nucleus. In terms of biological role, involved in ribosomal large subunit biogenesis. Acts both as a positive transcription factor for 5S RNA genes, and as a specific RNA binding protein that complexes with 5S RNA in oocytes to form the 7S ribonucleoprotein storage particle. May play an essential role in the developmental change in 5S RNA gene expression. Interacts with the internal control region (ICR) of approximately 50 bases within the 5S RNA genes, is required for correct transcription of these genes by RNA polymerase III. Also binds the transcribed 5S RNA's. In Xenopus laevis (African clawed frog), this protein is Transcription factor IIIA (gtf3a).